We begin with the raw amino-acid sequence, 277 residues long: Ubiquitin-conjugating enzyme suppressor 1 (277 aa).

The disordered stretch occupies residues 254-277; the sequence is RTLACPDETNDNRGSEHYTKRKKI.

In terms of biological role, not known; its elevated expression suppresses the conditional cell cycle defects associated with UBC3/CDC34 mutations. This chain is Ubiquitin-conjugating enzyme suppressor 1 (UBS1), found in Saccharomyces cerevisiae (strain ATCC 204508 / S288c) (Baker's yeast).